The primary structure comprises 832 residues: MLPFLLATLGTAALNSSNPKDYCYSARIRSTVLQGLPFGGVPTVLALDFMCFLALLFLFSILRKVAWDYGRLALVTDADRLRRQERERVEQEYVASAMHGDSHDRYERLTSVSSSVDFDQRDNGFCSWLTAIFRIKDDEIRDKCGGDAVHYLSFQRHIIGLLVVVGVLSVGIVLPVNFSGDLLENNAYSFGRTTIANLKSGNNLLWLHTSFAFLYLLLTVYSMRRHTSKMRYKEDDLVKRTLFINGISKYAESEKIKKHFEEAYPNCTVLEARPCYNVARLMFLDAERKKAERGKLYFTNLQSKENVPAMINPKPCGHLCCCVVRGCEQVEAIEYYTKLEQRLKEDYRREKEKVNEKPLGMAFVTFHNETITAIILKDFNVCKCQGCTCRGEPRASSCSEALHISNWTVTYAPDPQNIYWEHLSIRGFIWWLRCLVINVVLFILLFFLTTPAIIITTMDKFNVTKPVEYLNNPIITQFFPTLLLWCFSALLPTIVYYSAFFEAHWTRSGENRTTMHKCYTFLIFMVLLLPSLGLSSLDLFFRWLFDKKFLAEAAIRFECVFLPDNGAFFVNYVIASAFIGNAMDLLRIPGLLMYMIRLCLARSAAERRNVKRHQAYEFQFGAAYAWMMCVFTVVMTYSITCPIIVPFGLMYMLLKHLVDRYNLYYAYLPAKLDKKIHSGAVNQVVAAPILCLFWLLFFSTMRTGFLAPTSMFTFVVLVITIVICLCHVCFGHFKYLSAHNYKIEHTETDAVSSRSNGRPPTAGAVPKSAKYIAQVLQDSEGDGDGDGAPGSSGDEPPSSSSQDEELLMPPDGLTDTDFQSCEDSLIENEIHQ.

The Extracellular segment spans residues 1-40; that stretch reads MLPFLLATLGTAALNSSNPKDYCYSARIRSTVLQGLPFGG. Residues 41 to 65 traverse the membrane as a helical segment; the sequence is VPTVLALDFMCFLALLFLFSILRKV. Cysteine 51 is lipidated: S-palmitoyl cysteine. At 66-145 the chain is on the cytoplasmic side; the sequence is AWDYGRLALV…KDDEIRDKCG (80 aa). The Mediates endoplasmic reticulum retention signature appears at 86–88; the sequence is RER. Phosphoserine occurs at positions 111, 113, 114, and 115. Residue cysteine 126 is the site of S-palmitoyl cysteine attachment. A helical membrane pass occupies residues 146–178; that stretch reads GDAVHYLSFQRHIIGLLVVVGVLSVGIVLPVNF. At 179-202 the chain is on the extracellular side; it reads SGDLLENNAYSFGRTTIANLKSGN. A helical membrane pass occupies residues 203 to 227; sequence NLLWLHTSFAFLYLLLTVYSMRRHT. Residues 228–427 lie on the Cytoplasmic side of the membrane; sequence SKMRYKEDDL…IYWEHLSIRG (200 aa). Positions 231–426 are intracellular linker IL2; confers mechanosensitivity; the sequence is RYKEDDLVKR…NIYWEHLSIR (196 aa). 2 S-palmitoyl cysteine lipidation sites follow: cysteine 382 and cysteine 398. Residues 428–457 form a helical membrane-spanning segment; the sequence is FIWWLRCLVINVVLFILLFFLTTPAIIITT. Over 458-472 the chain is Extracellular; the sequence is MDKFNVTKPVEYLNN. Asparagine 462 is a glycosylation site (N-linked (GlcNAc...) asparagine). Residues 473–502 form a helical membrane-spanning segment; the sequence is PIITQFFPTLLLWCFSALLPTIVYYSAFFE. Residues 503–506 are Cytoplasmic-facing; it reads AHWT. A helical membrane pass occupies residues 507 to 543; it reads RSGENRTTMHKCYTFLIFMVLLLPSLGLSSLDLFFRW. The Extracellular segment spans residues 544–566; the sequence is LFDKKFLAEAAIRFECVFLPDNG. The helical transmembrane segment at 567-599 threads the bilayer; it reads AFFVNYVIASAFIGNAMDLLRIPGLLMYMIRLC. Residues 567–599 form a gating helix region; that stretch reads AFFVNYVIASAFIGNAMDLLRIPGLLMYMIRLC. Residues 600 to 619 lie on the Cytoplasmic side of the membrane; it reads LARSAAERRNVKRHQAYEFQ. The helical transmembrane segment at 620 to 638 threads the bilayer; it reads FGAAYAWMMCVFTVVMTYS. The Extracellular portion of the chain corresponds to 639-641; the sequence is ITC. Residues 642 to 666 traverse the membrane as a helical segment; the sequence is PIIVPFGLMYMLLKHLVDRYNLYYA. The Cytoplasmic segment spans residues 667–673; that stretch reads YLPAKLD. The helical transmembrane segment at 674–702 threads the bilayer; it reads KKIHSGAVNQVVAAPILCLFWLLFFSTMR. Residues 703 to 707 lie on the Extracellular side of the membrane; the sequence is TGFLA. The chain crosses the membrane as a helical span at residues 708-728; sequence PTSMFTFVVLVITIVICLCHV. 2 S-palmitoyl cysteine lipidation sites follow: cysteine 726 and cysteine 729. Topologically, residues 729-832 are cytoplasmic; that stretch reads CFGHFKYLSA…DSLIENEIHQ (104 aa). Disordered regions lie at residues 748–767 and 776–818; these read TDAV…AVPK and LQDS…DTDF. Over residues 749–758 the composition is skewed to polar residues; the sequence is DAVSSRSNGR. Positions 789–801 are enriched in low complexity; that stretch reads PGSSGDEPPSSSS.

Belongs to the CSC1 (TC 1.A.17) family. Monomer. Interacts with SLC19A2; interaction is required for the phospholipid scramblase activity. In terms of processing, palmitoylation is required for localization to the plasma membrane and stability. In terms of tissue distribution, expressed in cochlear hair cells (at protein level). Highly expressed in the subfornical organ of the brain. Expressed in small intestine. As to expression, brain-specific.

It is found in the cell membrane. The protein resides in the endoplasmic reticulum membrane. Its subcellular location is the lysosome membrane. It localises to the early endosome membrane. The catalysed reaction is Ca(2+)(in) = Ca(2+)(out). It catalyses the reaction Mg(2+)(in) = Mg(2+)(out). The enzyme catalyses K(+)(in) = K(+)(out). It carries out the reaction Na(+)(in) = Na(+)(out). The catalysed reaction is Cs(+)(in) = Cs(+)(out). It catalyses the reaction a 1,2-diacyl-sn-glycero-3-phosphocholine(in) = a 1,2-diacyl-sn-glycero-3-phosphocholine(out). The enzyme catalyses a sphingomyelin(in) = a sphingomyelin(out). Functionally, mechanosensitive cation channel with low conductance and high activation threshold. Osmosensitive cation channel preferentially activated by hypotonic stress. Also acts as a phospholipid scramblase in response to changes in membrane structure: upon changes in membrane curvature and thickness, alters its conformation and translocates phospholipids, such as phosphatidylcholine and sphingomyelin, thereby controlling plasma membrane lipid distribution. Forms a heterodimer with SLC19A2, which mediates phospholipid scramblase activity following Ca(2+) stimulation. Expressed in excitatory neurons of the subfornical organ and functions as a thirst receptor that mediates neuronal response to hyperosmolality to drive thirst and drinking behavior. Facilitates intestinal motility by promoting proliferation of intestinal stem cells. Essential for the baby's first breath and respiration throughout life. Upon lung inflation conducts cation currents in alveolar type 1 and 2 cells triggering lamellar body exocytosis and surfactant secretion into airspace. Acts as an osmosensor in cochlear outer hair cells (OHCs) where it mediates calcium influx and regulatory volume decrease response. Required for the maintenance of OHC morphology, OHC survival and normal hearing. Its function is as follows. Brain-specific osmosensitive calcium channel isoform. The chain is Mechanosensitive cation channel TMEM63B from Mus musculus (Mouse).